We begin with the raw amino-acid sequence, 890 residues long: Kinesin-like protein KIN-7C, mitochondrial (890 aa).

Over residues Met1–Ser13 the composition is skewed to polar residues. The disordered stretch occupies residues Met1–Ala66. The transit peptide at Met1–Lys73 directs the protein to the mitochondrion. Low complexity predominate over residues Ser40–Ala66. The 320-residue stretch at Asn75–Val394 folds into the Kinesin motor domain. Gly155 to Thr162 serves as a coordination point for ATP. A coiled-coil region spans residues Glu395 to Leu468. Residues Asp511 to Ile595 are disordered. The span at Ser569–Ser579 shows a compositional bias: low complexity. Coiled-coil stretches lie at residues His664 to Ile693 and Ala729 to Arg765. Positions Thr768–Thr797 are disordered. The stretch at Asn818–Glu884 forms a coiled coil.

This sequence belongs to the TRAFAC class myosin-kinesin ATPase superfamily. Kinesin family. KIN-7 subfamily.

The protein resides in the mitochondrion. This is Kinesin-like protein KIN-7C, mitochondrial from Arabidopsis thaliana (Mouse-ear cress).